The sequence spans 880 residues: Lon protease (880 aa).

Positions 1–37 (MADYNDKNYLLHMSGPDSDTGPGIENEDPRAVENPGH) are disordered. Residues 27–37 (EDPRAVENPGH) show a composition bias toward basic and acidic residues. The Lon N-terminal domain occupies 57–251 (LPILPVRDVV…LVNTQLQREV (195 aa)). 404–411 (GPPGVGKT) lines the ATP pocket. The Lon proteolytic domain maps to 640–821 (KLMPGMALGL…DELLPLVFEG (182 aa)). Active-site residues include Ser727 and Lys770. The segment covering 826 to 836 (GGVSGAGQAGD) has biased composition (gly residues). Residues 826–880 (GGVSGAGQAGDKGGKSKAAAGKKDVVAARPAKPAAPARRRKDKTEDELPTAEAGA) form a disordered region. Low complexity predominate over residues 852 to 861 (AARPAKPAAP).

Belongs to the peptidase S16 family. In terms of assembly, homohexamer. Organized in a ring with a central cavity.

The protein localises to the cytoplasm. It carries out the reaction Hydrolysis of proteins in presence of ATP.. ATP-dependent serine protease that mediates the selective degradation of mutant and abnormal proteins as well as certain short-lived regulatory proteins. Required for cellular homeostasis and for survival from DNA damage and developmental changes induced by stress. Degrades polypeptides processively to yield small peptide fragments that are 5 to 10 amino acids long. Binds to DNA in a double-stranded, site-specific manner. This is Lon protease from Desulfovibrio desulfuricans (strain ATCC 27774 / DSM 6949 / MB).